A 250-amino-acid polypeptide reads, in one-letter code: MQHIKHMRTAVRLARYALDHDETPVACIFVHTPTGQVMAYGMNDTNKSLTGVAHAEFMGIDQIKAMLGSRGVVDVFKDITLYVTVEPCIMCASALKQLDIGKVVFGCGNERFGGNGTVLSVNHDTCTLVPKNNSAAGYESIPGILRKEAIMLLRYFYVRQNERAPKPRSKSDRVLDKNTFPPMEWSKYLNEEAFIETFGDDYRTCFANKVDLSSNSVDWDLIDSHQDNIIQELEEQCKMFKFNVHKKSKV.

The 119-residue stretch at 1 to 119 folds into the CMP/dCMP-type deaminase domain; sequence MQHIKHMRTA…ERFGGNGTVL (119 aa). H54 lines the Zn(2+) pocket. E56 acts as the Proton donor in catalysis. Positions 88 and 91 each coordinate Zn(2+).

It belongs to the cytidine and deoxycytidylate deaminase family. ADAT2 subfamily. Heterodimer with TAD3. Zn(2+) is required as a cofactor.

Its subcellular location is the cytoplasm. The protein resides in the nucleus. The catalysed reaction is adenosine(34) in tRNA + H2O + H(+) = inosine(34) in tRNA + NH4(+). Its function is as follows. Structural subunit of tRNA-specific adenosine deaminase, which deaminates adenosine-34 (the first, also called wobble position of the anticodon) to inosine in many tRNAs. Inosine-34 allows the decoding of 3 different nucleotides at the third position of mRNA codons, as inosine is able to pair with U, C, and A. The chain is tRNA-specific adenosine deaminase subunit TAD2 (TAD2) from Saccharomyces cerevisiae (strain ATCC 204508 / S288c) (Baker's yeast).